The following is a 488-amino-acid chain: Retinoic acid receptor RXR-alpha (488 aa).

The interval 1–160 is modulating; it reads MSSAAMDTKH…GAMASFTKHI (160 aa). Lysine 134 is covalently cross-linked (Glycyl lysine isopeptide (Lys-Gly) (interchain with G-Cter in SUMO)). A DNA-binding region (nuclear receptor) is located at residues 158-233; that stretch reads KHICAICGDR…MGMKREAVQE (76 aa). The Zn(2+) site is built by cysteine 161, cysteine 164, cysteine 178, and cysteine 181. The NR C4-type zinc-finger motif lies at 161-181; the sequence is CAICGDRSSGKHYGVYSCEGC. The tract at residues 186-191 is nuclear localization signal; it reads KRTVRK. Positions 197, 203, 213, and 216 each coordinate Zn(2+). An NR C4-type zinc finger spans residues 197-216; that stretch reads CRDSKDCMIDKRQRNRCQYC. The hinge stretch occupies residues 227–250; the sequence is KREAVQEERQRGKERNENEVESSN. Residues 232–244 show a composition bias toward basic and acidic residues; it reads QEERQRGKERNEN. The tract at residues 232–256 is disordered; the sequence is QEERQRGKERNENEVESSNSANEDM. In terms of domain architecture, NR LBD spans 253-484; that stretch reads NEDMPVEKIL…TFLMEMLEAP (232 aa). Arginine 342 and alanine 353 together coordinate 9-cis-retinoate. Positions 342 and 353 each coordinate all-trans-retinoate. The segment at 374 to 394 is required for nuclear export; the sequence is RVLTELVSKMRDMQMDKTELG. The AF-2 stretch occupies residues 473 to 484; that stretch reads IDTFLMEMLEAP.

It belongs to the nuclear hormone receptor family. NR2 subfamily. In terms of assembly, homodimer. Heterodimer; with a rar molecule. Binds DNA preferentially as a rar/rxr heterodimer. Interacts with coactivator ncoa3 and with senp6. Sumoylated on Lys-134; which negatively regulates transcriptional activity. Desumoylated specifically by SENP6.

Its subcellular location is the nucleus. Functionally, receptor for retinoic acid that acts as a transcription factor. Forms homo- or heterodimers with retinoic acid receptors (rars) and binds to target response elements in response to their ligands, all-trans or 9-cis retinoic acid, to regulate gene expression in various biological processes. The rar/rxr heterodimers bind to the retinoic acid response elements (RARE) composed of tandem 5'-AGGTCA-3' sites known as DR1-DR5 to regulate transcription. The high affinity ligand for rxrs is 9-cis retinoic acid. In the absence of ligand, the rar/rxr heterodimers associate with a multiprotein complex containing transcription corepressors that induce histone deacetylation, chromatin condensation and transcriptional suppression. On ligand binding, the corepressors dissociate from the receptors and coactivators are recruited leading to transcriptional activation. The chain is Retinoic acid receptor RXR-alpha (rxra) from Xenopus laevis (African clawed frog).